The primary structure comprises 336 residues: Potassium channel subfamily K member 1 (336 aa).

Topologically, residues 1–20 (MLQSLAGSSCVRLVERHRSA) are cytoplasmic. The chain crosses the membrane as a helical span at residues 21–41 (WCFGFLVLGYLLYLVFGAVVF). Topologically, residues 42 to 103 (SSVELPYEDL…SNASGNWNWD (62 aa)) are extracellular. N-linked (GlcNAc...) asparagine glycosylation is present at Asn-95. The helical intramembrane region spans 104–116 (FTSALFFASTVLS). Residues 117–122 (TTGYGH) lie within the membrane without spanning it. The selectivity filter 1 stretch occupies residues 117 to 122 (TTGYGH). Over 123-132 (TVPLSDGGKA) the chain is Extracellular. Residues 133–156 (FCIIYSVIGIPFTLLFLTAVVQRI) traverse the membrane as a helical segment. Residues 157-181 (TVHVTRRPVLYFHIRWGFSKQVVAI) lie on the Cytoplasmic side of the membrane. The helical transmembrane segment at 182-202 (VHAVLLGFVTVSCFFFIPAAV) threads the bilayer. Residues 203-211 (FSVLEDDWN) lie on the Extracellular side of the membrane. Positions 212-224 (FLESFYFCFISLS) form an intramembrane region, helical. Residues 225 to 230 (TIGLGD) form a selectivity filter 2 region. Residues 225-231 (TIGLGDY) lie within the membrane without spanning it. Over 232-243 (VPGEGYNQKFRE) the chain is Extracellular. A helical membrane pass occupies residues 244–267 (LYKIGITCYLLLGLIAMLVVLETF). The Cytoplasmic portion of the chain corresponds to 268–336 (CELHELKKFR…SACVDGPANH (69 aa)). Lys-274 participates in a covalent cross-link: Glycyl lysine isopeptide (Lys-Gly) (interchain with G-Cter in SUMO). Residues 293 to 299 (IIEHDQL) are important for intracellular retention in recycling endosomes. Position 326 is a phosphoserine (Ser-326).

The protein belongs to the two pore domain potassium channel (TC 1.A.1.8) family. Homodimer; disulfide-linked. Heterodimer with KCNK2; disulfide-linked. In astrocytes, forms mostly heterodimeric potassium channels with KCNK2, with only a minor proportion of functional channels containing homodimeric KCNK1. Interacts with KCNK3 and KCNK9, forming functional heterodimeric channels. Interacts with GNG4. Identified in a complex with PSD and ARF6; interacts only with PSD that is bound to ARF6. Interacts with UBE2I. In terms of processing, sumoylation is controversial. Sumoylated by UBE2I. Not sumoylated when expressed in xenopus oocytes or mammalian cells. Sumoylation inactivates the channel, but does not interfere with expression at the cell membrane. Sumoylation of a single subunit is sufficient to silence the dimeric channel. Sumoylation of KCNK1 is sufficient to silence heterodimeric channels formed by KCNK1 and KCNK3 or KCNK9. Desumoylated by SENP1; this activates the channel. Desumoylated by SENP1; this strongly increases halothane-mediated activation of heterodimeric channels formed with KCNK9. SENP1 treatment has no effect. In terms of tissue distribution, detected in bronchial epithelial cells. Detected in heart left atrium and left ventricle. Detected in cardiac myocytes (at protein level). Widely expressed with high levels in heart, brain and kidney, and lower levels in colon, ovary, placenta, lung and liver. Highly expressed in cerebellum, and detected at lower levels in amygdala, caudate nucleus, brain cortex, hippocampus, putamen, substantia nigra, thalamus, dorsal root ganglion, spinal cord, pituitary, heart, kidney, lung, placenta, pancreas, stomach, small intestine, uterus and prostate. Detected in right and left heart ventricle and atrium, and in heart Purkinje fibers.

Its subcellular location is the cell membrane. It is found in the recycling endosome. It localises to the synaptic cell membrane. The protein localises to the cytoplasmic vesicle. The protein resides in the perikaryon. Its subcellular location is the cell projection. It is found in the dendrite. It localises to the apical cell membrane. The catalysed reaction is K(+)(in) = K(+)(out). The enzyme catalyses NH4(+)(in) = NH4(+)(out). It catalyses the reaction Na(+)(in) = Na(+)(out). It carries out the reaction Rb(+)(in) = Rb(+)(out). The catalysed reaction is Cs(+)(in) = Cs(+)(out). The enzyme catalyses Li(+)(in) = Li(+)(out). It catalyses the reaction L-glutamate(out) = L-glutamate(in). It carries out the reaction chloride(in) = chloride(out). Its activity is regulated as follows. Inhibited by Ba(2+) ions and quinidine. Inhibited by quinine. Is slightly inhibited by 10 mM tetraethylammonium (TEA), and only marginally inhibited by 4-aminopyridine, charybdotoxin and dendrotoxin. Lowering the extracellular pH to below 6.5 transiently activates the channel, and then inhibits channel activity. Inhibited when the intracellular pH is decreased down to pH 6.0, but this may be due to indirect effects. Ion channel that contributes to passive transmembrane potassium transport and to the regulation of the resting membrane potential in brain astrocytes, but also in kidney and in other tissues. Forms dimeric channels through which potassium ions pass in accordance with their electrochemical gradient. The channel is selective for K(+) ions at physiological potassium concentrations and at neutral pH, but becomes permeable to Na(+) at subphysiological K(+) levels and upon acidification of the extracellular medium. The homodimer has very low potassium channel activity, when expressed in heterologous systems, and can function as weakly inward rectifying potassium channel. Channel activity is modulated by activation of serotonin receptors. Heterodimeric channels containing KCNK1 and KCNK2 have much higher activity, and may represent the predominant form in astrocytes. Heterodimeric channels containing KCNK1 and KCNK3 or KCNK9 have much higher activity. Heterodimeric channels formed by KCNK1 and KCNK9 may contribute to halothane-sensitive currents. Mediates outward rectifying potassium currents in dentate gyrus granule cells and contributes to the regulation of their resting membrane potential. Contributes to the regulation of action potential firing in dentate gyrus granule cells and down-regulates their intrinsic excitability. In astrocytes, the heterodimer formed by KCNK1 and KCNK2 is required for rapid glutamate release in response to activation of G-protein coupled receptors, such as F2R and CNR1. Required for normal ion and water transport in the kidney. Contributes to the regulation of the resting membrane potential of pancreatic beta cells. The low channel activity of homodimeric KCNK1 may be due to sumoylation. The low channel activity may be due to rapid internalization from the cell membrane and retention in recycling endosomes. Permeable to monovalent cations with ion selectivity for K(+) &gt; Rb(+) &gt;&gt; NH4(+) &gt;&gt; Cs(+) = Na(+) = Li(+). This is Potassium channel subfamily K member 1 (KCNK1) from Homo sapiens (Human).